Reading from the N-terminus, the 319-residue chain is Probable NAD(P)H-dependent D-xylose reductase xyl1 (319 aa).

Residue Asn-26 is glycosylated (N-linked (GlcNAc...) asparagine). The active-site Proton donor is Tyr-50. Residue His-112 coordinates substrate. 2 N-linked (GlcNAc...) asparagine glycosylation sites follow: Asn-141 and Asn-167. NAD(+) is bound by residues 166 to 167 (SN), 215 to 224 (SSFGPLSFLE), and 271 to 281 (KSNNPQRLKQN).

It belongs to the aldo/keto reductase family.

The catalysed reaction is xylitol + NAD(+) = D-xylose + NADH + H(+). It catalyses the reaction xylitol + NADP(+) = D-xylose + NADPH + H(+). It participates in carbohydrate metabolism; D-xylose degradation. Functionally, catalyzes the initial reaction in the xylose utilization pathway by reducing D-xylose into xylitol. Xylose is a major component of hemicelluloses such as xylan. Most fungi utilize D-xylose via three enzymatic reactions, xylose reductase (XR), xylitol dehydrogenase (XDH), and xylulokinase, to form xylulose 5-phosphate, which enters pentose phosphate pathway. In Aspergillus niger (strain ATCC MYA-4892 / CBS 513.88 / FGSC A1513), this protein is Probable NAD(P)H-dependent D-xylose reductase xyl1 (xyl1).